Consider the following 406-residue polypeptide: Argininosuccinate synthase (406 aa).

ATP contacts are provided by residues 11 to 19 (AYSGGLDTS) and Ala38. The L-citrulline site is built by Tyr91 and Ser96. An ATP-binding site is contributed by Gly121. The L-aspartate site is built by Thr123, Asn127, and Asp128. Residue Asn127 participates in L-citrulline binding. Positions 131, 181, 190, 266, and 278 each coordinate L-citrulline.

Belongs to the argininosuccinate synthase family. Type 1 subfamily. As to quaternary structure, homotetramer.

The protein localises to the cytoplasm. The enzyme catalyses L-citrulline + L-aspartate + ATP = 2-(N(omega)-L-arginino)succinate + AMP + diphosphate + H(+). It functions in the pathway amino-acid biosynthesis; L-arginine biosynthesis; L-arginine from L-ornithine and carbamoyl phosphate: step 2/3. The polypeptide is Argininosuccinate synthase (Campylobacter lari (strain RM2100 / D67 / ATCC BAA-1060)).